The primary structure comprises 337 residues: Glyceraldehyde-3-phosphate dehydrogenase (337 aa).

NAD(+) contacts are provided by residues 11–12 (TI) and G111. Residue 140-142 (SCN) participates in D-glyceraldehyde 3-phosphate binding. C141 functions as the Nucleophile in the catalytic mechanism. An NAD(+)-binding site is contributed by R169. A disordered region spans residues 177–196 (KKGPINSIVPTTEVPSHHGP). A D-glyceraldehyde 3-phosphate-binding site is contributed by 194 to 195 (HG). Q301 is an NAD(+) binding site.

The protein belongs to the glyceraldehyde-3-phosphate dehydrogenase family. In terms of assembly, homotetramer.

It is found in the cytoplasm. It carries out the reaction D-glyceraldehyde 3-phosphate + phosphate + NADP(+) = (2R)-3-phospho-glyceroyl phosphate + NADPH + H(+). The enzyme catalyses D-glyceraldehyde 3-phosphate + phosphate + NAD(+) = (2R)-3-phospho-glyceroyl phosphate + NADH + H(+). The protein operates within carbohydrate degradation; glycolysis; pyruvate from D-glyceraldehyde 3-phosphate: step 1/5. The polypeptide is Glyceraldehyde-3-phosphate dehydrogenase (Methanosphaera stadtmanae (strain ATCC 43021 / DSM 3091 / JCM 11832 / MCB-3)).